The primary structure comprises 105 residues: Small ribosomal subunit protein uS10 (105 aa).

This sequence belongs to the universal ribosomal protein uS10 family. In terms of assembly, part of the 30S ribosomal subunit.

Involved in the binding of tRNA to the ribosomes. The protein is Small ribosomal subunit protein uS10 of Gloeothece citriformis (strain PCC 7424) (Cyanothece sp. (strain PCC 7424)).